We begin with the raw amino-acid sequence, 374 residues long: Eukaryotic translation initiation factor 3 subunit M (374 aa).

The 160-residue stretch at 180-339 folds into the PCI domain; sequence TAAKVMVELL…RKVVVSHSTH (160 aa).

It belongs to the eIF-3 subunit M family. Component of the eukaryotic translation initiation factor 3 (eIF-3) complex, which is composed of 13 subunits: EIF3A, EIF3B, EIF3C, EIF3D, EIF3E, EIF3F, EIF3G, EIF3H, EIF3I, EIF3J, EIF3K, EIF3L and EIF3M.

It localises to the cytoplasm. In terms of biological role, component of the eukaryotic translation initiation factor 3 (eIF-3) complex, which is involved in protein synthesis of a specialized repertoire of mRNAs and, together with other initiation factors, stimulates binding of mRNA and methionyl-tRNAi to the 40S ribosome. The eIF-3 complex specifically targets and initiates translation of a subset of mRNAs involved in cell proliferation. The sequence is that of Eukaryotic translation initiation factor 3 subunit M from Gallus gallus (Chicken).